We begin with the raw amino-acid sequence, 290 residues long: MDYKRFKGKHANIVIEIISLLEKGVKKAQEILEKPDAGSYTQLENSSGDTPIKADLALDKFLEETFLSLENVKSVFSEEKETPVTKENGSYLIAYDPLDGSSVMEANFLVGTIIGVYEKDYKAQNLVASLYVVFGHKIELVVALEEVYRYAFYQNKFHFIETIVLENKGKIIASGGNQKDFSLGLKKALEGFFAENYRLRYSGSMVADVHHVLVKKGGMFSYPQKKLRKLFEVFPLALMVEKAKGEAFYFDKGVKKRLLDQSVESYHEKSECYLASPHEAQILEKHLKGE.

Residues Glu-78, Asp-96, Leu-98, and Asp-99 each coordinate Mg(2+). Substrate-binding positions include 99 to 102, Tyr-201, and Lys-226; that span reads DGSS. A Mg(2+)-binding site is contributed by Glu-232.

This sequence belongs to the FBPase class 1 family. Homotetramer. The cofactor is Mg(2+).

The protein localises to the cytoplasm. It catalyses the reaction beta-D-fructose 1,6-bisphosphate + H2O = beta-D-fructose 6-phosphate + phosphate. It functions in the pathway carbohydrate biosynthesis; gluconeogenesis. The chain is Fructose-1,6-bisphosphatase class 1 from Helicobacter pylori (strain J99 / ATCC 700824) (Campylobacter pylori J99).